The primary structure comprises 286 residues: Ribosome maturation factor RimP (286 aa).

Residues 200–224 are compositionally biased toward acidic residues; it reads LDGEDGDDTGVDAGDPDQDDADDAL. The tract at residues 200-286 is disordered; that stretch reads LDGEDGDDTG…ANASTVKETH (87 aa). The span at 248–267 shows a compositional bias: basic residues; the sequence is VGRKAKGKKASPKKSNAKKK. The segment covering 273-286 has biased composition (polar residues); sequence AASSANASTVKETH.

This sequence belongs to the RimP family.

Its subcellular location is the cytoplasm. Functionally, required for maturation of 30S ribosomal subunits. This chain is Ribosome maturation factor RimP, found in Xanthobacter autotrophicus (strain ATCC BAA-1158 / Py2).